The primary structure comprises 648 residues: PTS system N-acetylglucosamine-specific EIICBA component (648 aa).

Met-1 is subject to N-formylmethionine. The PTS EIIC type-1 domain occupies 1 to 371 (MNILGFFQRL…FNLKTPGRED (371 aa)). A run of 12 helical transmembrane segments spans residues 16–36 (LPIA…PDLL), 38–58 (VAFI…IFAI), 70–90 (GAAA…MVTI), 92–112 (PEIN…GAAY), 132–152 (FVPI…GYVW), 159–179 (IHAG…IFGF), 192–212 (VLNT…GTVF), 232–252 (GFFP…YFAA), 260–280 (VGGM…TEPL), 282–302 (FLFM…TGIS), 303–323 (LFVA…GAID), and 339–359 (MLLV…SLVI). The PTS EIIB type-1 domain occupies 390 to 472 (TQLATNYIAA…KKVVARGPVA (83 aa)). Cys-412 serves as the catalytic Phosphocysteine intermediate; for EIIB activity. Cys-412 is modified (phosphocysteine; by EIIA). One can recognise a PTS EIIA type-1 domain in the interval 517–621 (DEAFASKAVG…SMISPVVCSN (105 aa)). Residues His-554 and His-569 each contribute to the Zn(2+) site. His-569 serves as the catalytic Tele-phosphohistidine intermediate; for EIIA activity. His-569 carries the phosphohistidine; by HPr modification.

The cofactor is Zn(2+). In terms of processing, 60% of isolated protein was N-formylated.

Its subcellular location is the cell inner membrane. The enzyme catalyses N(pros)-phospho-L-histidyl-[protein] + N-acetyl-D-glucosamine(out) = N-acetyl-D-glucosamine 6-phosphate(in) + L-histidyl-[protein]. P-chloromercuribenzoate inhibits the accumulation of both N-acetyl-D-glucosamine and antibiotic streptozotocin (2-deoxy-2-(3-methyl-3-nitrosoureido)-D-glucopyranose). N-acetyl-D-glucosamine is a competitive inhibitor for the uptake of streptozotocin. In terms of biological role, the phosphoenolpyruvate-dependent sugar phosphotransferase system (sugar PTS), a major carbohydrate active transport system, catalyzes the phosphorylation of incoming sugar substrates concomitantly with their translocation across the cell membrane. This system is involved in N-acetylglucosamine transport. It can also transport and phosphorylate the antibiotic streptozotocin. Could play a significant role in the recycling of peptidoglycan. The sequence is that of PTS system N-acetylglucosamine-specific EIICBA component from Escherichia coli (strain K12).